Here is a 166-residue protein sequence, read N- to C-terminus: Regulatory protein RecX (166 aa).

It belongs to the RecX family.

It is found in the cytoplasm. Modulates RecA activity. The chain is Regulatory protein RecX from Escherichia coli O139:H28 (strain E24377A / ETEC).